Reading from the N-terminus, the 116-residue chain is Large ribosomal subunit protein bL20 (116 aa).

Belongs to the bacterial ribosomal protein bL20 family.

Binds directly to 23S ribosomal RNA and is necessary for the in vitro assembly process of the 50S ribosomal subunit. It is not involved in the protein synthesizing functions of that subunit. The protein is Large ribosomal subunit protein bL20 of Helicobacter pylori (strain HPAG1).